A 171-amino-acid polypeptide reads, in one-letter code: Group 1 truncated hemoglobin LI410 (171 aa).

The transit peptide at 1 to 23 directs the protein to the chloroplast; that stretch reads MMRTVQLRTLRPCIRAQQQPVRA. Residues Tyr-63 and His-111 each contribute to the heme site.

It belongs to the truncated hemoglobin family. Group I subfamily. It depends on heme as a cofactor.

The protein localises to the plastid. It is found in the chloroplast. This chain is Group 1 truncated hemoglobin LI410 (LI410), found in Chlamydomonas moewusii (Chlamydomonas eugametos).